Here is a 166-residue protein sequence, read N- to C-terminus: Urease accessory protein UreE (166 aa).

It belongs to the UreE family.

It localises to the cytoplasm. Involved in urease metallocenter assembly. Binds nickel. Probably functions as a nickel donor during metallocenter assembly. The polypeptide is Urease accessory protein UreE (Azotobacter vinelandii (strain DJ / ATCC BAA-1303)).